Here is a 526-residue protein sequence, read N- to C-terminus: Light-independent protochlorophyllide reductase subunit B (526 aa).

Asp36 contacts [4Fe-4S] cluster. The active-site Proton donor is Asp290. Substrate is bound at residue 425–426; the sequence is GL.

This sequence belongs to the ChlB/BchB/BchZ family. In terms of assembly, protochlorophyllide reductase is composed of three subunits; ChlL, ChlN and ChlB. Forms a heterotetramer of two ChlB and two ChlN subunits. It depends on [4Fe-4S] cluster as a cofactor.

The enzyme catalyses chlorophyllide a + oxidized 2[4Fe-4S]-[ferredoxin] + 2 ADP + 2 phosphate = protochlorophyllide a + reduced 2[4Fe-4S]-[ferredoxin] + 2 ATP + 2 H2O. The protein operates within porphyrin-containing compound metabolism; chlorophyll biosynthesis (light-independent). In terms of biological role, component of the dark-operative protochlorophyllide reductase (DPOR) that uses Mg-ATP and reduced ferredoxin to reduce ring D of protochlorophyllide (Pchlide) to form chlorophyllide a (Chlide). This reaction is light-independent. The NB-protein (ChlN-ChlB) is the catalytic component of the complex. This is Light-independent protochlorophyllide reductase subunit B from Prochlorococcus marinus subsp. pastoris (strain CCMP1986 / NIES-2087 / MED4).